Reading from the N-terminus, the 109-residue chain is UPF0060 membrane protein YfjF (109 aa).

4 consecutive transmembrane segments (helical) span residues 6–26 (ILLFLAAGLAEIGGGYLVWLW), 32–52 (PAGYGIAGALILIVYGILPTF), 61–81 (VYAAYGGVFIVLAVLWGWLVD), and 87–107 (LYDWIGAFICLIGVCVILFAP).

It belongs to the UPF0060 family.

Its subcellular location is the cell membrane. In Bacillus subtilis (strain 168), this protein is UPF0060 membrane protein YfjF (yfjF).